We begin with the raw amino-acid sequence, 180 residues long: uncharacterized protein (180 aa).

The region spanning 17 to 80 is the HTH dtxR-type domain; the sequence is RRSRILHYLM…LIPNMGVRLT (64 aa).

The protein belongs to the DtxR/MntR family.

This is an uncharacterized protein from Aeropyrum pernix (strain ATCC 700893 / DSM 11879 / JCM 9820 / NBRC 100138 / K1).